Reading from the N-terminus, the 298-residue chain is Factor-induced gene 1 protein (298 aa).

The next 4 helical transmembrane spans lie at 17-37 (IFALAFNLISIFLLIFLLIGC), 163-183 (VLMATVILTILMFLFILYVTV), 195-215 (FLLLLSSTIVLTWGIGAMWTH), and 243-263 (VMAWFSFAFLLLDSVVLWLIF). Serine 288 is subject to Phosphoserine. Phosphothreonine is present on threonine 293. Phosphoserine is present on serine 296.

The protein localises to the membrane. In terms of biological role, required for efficient mating. This is Factor-induced gene 1 protein (FIG1) from Saccharomyces cerevisiae (strain ATCC 204508 / S288c) (Baker's yeast).